A 210-amino-acid polypeptide reads, in one-letter code: FMN-dependent NADH:quinone oxidoreductase 9 (210 aa).

Residues S10 and 16–18 (SAS) contribute to the FMN site.

The protein belongs to the azoreductase type 1 family. As to quaternary structure, homodimer. FMN is required as a cofactor.

The enzyme catalyses 2 a quinone + NADH + H(+) = 2 a 1,4-benzosemiquinone + NAD(+). The catalysed reaction is N,N-dimethyl-1,4-phenylenediamine + anthranilate + 2 NAD(+) = 2-(4-dimethylaminophenyl)diazenylbenzoate + 2 NADH + 2 H(+). Its function is as follows. Quinone reductase that provides resistance to thiol-specific stress caused by electrophilic quinones. Functionally, also exhibits azoreductase activity. Catalyzes the reductive cleavage of the azo bond in aromatic azo compounds to the corresponding amines. This is FMN-dependent NADH:quinone oxidoreductase 9 from Burkholderia lata (strain ATCC 17760 / DSM 23089 / LMG 22485 / NCIMB 9086 / R18194 / 383).